We begin with the raw amino-acid sequence, 616 residues long: Dihydroxy-acid dehydratase (616 aa).

Asp-81 serves as a coordination point for Mg(2+). Position 122 (Cys-122) interacts with [2Fe-2S] cluster. Positions 123 and 124 each coordinate Mg(2+). At Lys-124 the chain carries N6-carboxylysine. Cys-195 is a [2Fe-2S] cluster binding site. Glu-491 lines the Mg(2+) pocket. Ser-517 functions as the Proton acceptor in the catalytic mechanism.

It belongs to the IlvD/Edd family. Homodimer. Requires [2Fe-2S] cluster as cofactor. Mg(2+) serves as cofactor.

The catalysed reaction is (2R)-2,3-dihydroxy-3-methylbutanoate = 3-methyl-2-oxobutanoate + H2O. It catalyses the reaction (2R,3R)-2,3-dihydroxy-3-methylpentanoate = (S)-3-methyl-2-oxopentanoate + H2O. Its pathway is amino-acid biosynthesis; L-isoleucine biosynthesis; L-isoleucine from 2-oxobutanoate: step 3/4. The protein operates within amino-acid biosynthesis; L-valine biosynthesis; L-valine from pyruvate: step 3/4. Functionally, functions in the biosynthesis of branched-chain amino acids. Catalyzes the dehydration of (2R,3R)-2,3-dihydroxy-3-methylpentanoate (2,3-dihydroxy-3-methylvalerate) into 2-oxo-3-methylpentanoate (2-oxo-3-methylvalerate) and of (2R)-2,3-dihydroxy-3-methylbutanoate (2,3-dihydroxyisovalerate) into 2-oxo-3-methylbutanoate (2-oxoisovalerate), the penultimate precursor to L-isoleucine and L-valine, respectively. This chain is Dihydroxy-acid dehydratase, found in Yersinia pseudotuberculosis serotype O:3 (strain YPIII).